The sequence spans 537 residues: ATP synthase subunit beta (537 aa).

The tract at residues 1-61 (MAKAATSKKE…SSPQKGGKKG (61 aa)) is disordered. The segment covering 7-18 (SKKEASKVEAKK) has biased composition (basic and acidic residues). The segment covering 44–55 (NSPSRTGSSSPQ) has biased composition (polar residues). 209-216 (GGAGVGKT) provides a ligand contact to ATP.

Belongs to the ATPase alpha/beta chains family. F-type ATPases have 2 components, CF(1) - the catalytic core - and CF(0) - the membrane proton channel. CF(1) has five subunits: alpha(3), beta(3), gamma(1), delta(1), epsilon(1). CF(0) has three main subunits: a(1), b(2) and c(9-12). The alpha and beta chains form an alternating ring which encloses part of the gamma chain. CF(1) is attached to CF(0) by a central stalk formed by the gamma and epsilon chains, while a peripheral stalk is formed by the delta and b chains.

The protein localises to the cell inner membrane. The enzyme catalyses ATP + H2O + 4 H(+)(in) = ADP + phosphate + 5 H(+)(out). Produces ATP from ADP in the presence of a proton gradient across the membrane. The catalytic sites are hosted primarily by the beta subunits. The protein is ATP synthase subunit beta of Bartonella bacilliformis (strain ATCC 35685 / KC583 / Herrer 020/F12,63).